Here is a 196-residue protein sequence, read N- to C-terminus: Protein LURP-one-related 8 (196 aa).

It belongs to the LOR family.

Might be related to the phospholipid scramblase and tubby-like superfamily of membrane tethered transcription factors. The polypeptide is Protein LURP-one-related 8 (Arabidopsis thaliana (Mouse-ear cress)).